The chain runs to 173 residues: Crossover junction endodeoxyribonuclease RuvC (173 aa).

Residues Asp8, Glu67, and Asp139 contribute to the active site. Residues Asp8, Glu67, and Asp139 each contribute to the Mg(2+) site.

It belongs to the RuvC family. As to quaternary structure, homodimer which binds Holliday junction (HJ) DNA. The HJ becomes 2-fold symmetrical on binding to RuvC with unstacked arms; it has a different conformation from HJ DNA in complex with RuvA. In the full resolvosome a probable DNA-RuvA(4)-RuvB(12)-RuvC(2) complex forms which resolves the HJ. Mg(2+) serves as cofactor.

The protein localises to the cytoplasm. It carries out the reaction Endonucleolytic cleavage at a junction such as a reciprocal single-stranded crossover between two homologous DNA duplexes (Holliday junction).. The RuvA-RuvB-RuvC complex processes Holliday junction (HJ) DNA during genetic recombination and DNA repair. Endonuclease that resolves HJ intermediates. Cleaves cruciform DNA by making single-stranded nicks across the HJ at symmetrical positions within the homologous arms, yielding a 5'-phosphate and a 3'-hydroxyl group; requires a central core of homology in the junction. The consensus cleavage sequence is 5'-(A/T)TT(C/G)-3'. Cleavage occurs on the 3'-side of the TT dinucleotide at the point of strand exchange. HJ branch migration catalyzed by RuvA-RuvB allows RuvC to scan DNA until it finds its consensus sequence, where it cleaves and resolves the cruciform DNA. In Shewanella sp. (strain MR-4), this protein is Crossover junction endodeoxyribonuclease RuvC.